We begin with the raw amino-acid sequence, 410 residues long: Peptidase T (410 aa).

A disordered region spans residues 11–30 (RYAEIDTQSDPDSESTPSTE). His78 is a binding site for Zn(2+). Asp80 is a catalytic residue. Asp140 contacts Zn(2+). The Proton acceptor role is filled by Glu174. Zn(2+) contacts are provided by Glu175, Asp197, and His379.

It belongs to the peptidase M20B family. Requires Zn(2+) as cofactor.

The protein resides in the cytoplasm. It catalyses the reaction Release of the N-terminal residue from a tripeptide.. Functionally, cleaves the N-terminal amino acid of tripeptides. This is Peptidase T from Staphylococcus carnosus (strain TM300).